We begin with the raw amino-acid sequence, 142 residues long: uncharacterized protein (142 aa).

The 120-residue stretch at 1–120 (MADKFDANDE…TILKWEKNMD (120 aa)) folds into the N-acetyltransferase domain.

Belongs to the acetyltransferase family.

This is an uncharacterized protein from Streptococcus pyogenes serotype M3 (strain ATCC BAA-595 / MGAS315).